Consider the following 297-residue polypeptide: uncharacterized protein (297 aa).

Disordered stretches follow at residues 19 to 133 (NEVD…EEKE), 147 to 214 (AEDD…VGIA), and 226 to 277 (EKTS…SKEA). Over residues 41 to 52 (EEPKNEKEKHDD) the composition is skewed to basic and acidic residues. Acidic residues predominate over residues 77-87 (PAEDDEEDEEF). Residues 88 to 101 (PSQSYGPSIPSNFR) are compositionally biased toward polar residues. Composition is skewed to basic and acidic residues over residues 147–161 (AEDD…REEW) and 236–268 (IHQK…EVRG).

This is an uncharacterized protein from Caenorhabditis elegans.